Reading from the N-terminus, the 535-residue chain is Peptide chain release factor 3 (535 aa).

One can recognise a tr-type G domain in the interval 8–277 (KRRRTFAIIS…TLVELAPPPG (270 aa)). GTP-binding positions include 17-24 (SHPDAGKT), 85-89 (DTPGH), and 139-142 (NKLD).

This sequence belongs to the TRAFAC class translation factor GTPase superfamily. Classic translation factor GTPase family. PrfC subfamily.

The protein localises to the cytoplasm. Functionally, increases the formation of ribosomal termination complexes and stimulates activities of RF-1 and RF-2. It binds guanine nucleotides and has strong preference for UGA stop codons. It may interact directly with the ribosome. The stimulation of RF-1 and RF-2 is significantly reduced by GTP and GDP, but not by GMP. This chain is Peptide chain release factor 3, found in Nitrosomonas europaea (strain ATCC 19718 / CIP 103999 / KCTC 2705 / NBRC 14298).